The chain runs to 324 residues: HSF-like protein (324 aa).

An N-terminal signal peptide occupies residues Met1–Ser19. 2 consecutive Cystatin fetuin-A-type domains span residues Gln21–Ser130 and Arg141–Val254. 6 cysteine pairs are disulfide-bonded: Cys28/Cys315, Cys85/Cys96, Cys110/Cys129, Cys143/Cys146, Cys205/Cys217, and Cys230/Cys253. N-linked (GlcNAc...) asparagine glycosylation occurs at Asn95. N-linked (GlcNAc...) asparagine glycosylation is present at Asn204. Residue Asn282 is glycosylated (N-linked (GlcNAc...) asparagine).

It belongs to the fetuin family. In terms of assembly, homodimer. In terms of tissue distribution, expressed by the liver.

Its subcellular location is the secreted. Functionally, may not have antihemorrhagic activity. In Protobothrops flavoviridis (Habu), this protein is HSF-like protein.